Reading from the N-terminus, the 687-residue chain is Dictomallein (687 aa).

Disordered stretches follow at residues 1-45 and 73-112; these read MGNG…SRRL and TAGG…STSA. Residues 233–501 enclose the Peptidase M66 domain; that stretch reads PVFGTDADVQ…QAWIASRVLA (269 aa). His393 lines the Zn(2+) pocket. The active site involves Glu394. Zn(2+) contacts are provided by His397 and His403.

It belongs to the dictomallein family. Zn(2+) is required as a cofactor.

In Burkholderia pseudomallei (strain 668), this protein is Dictomallein (dtmL).